A 258-amino-acid polypeptide reads, in one-letter code: Indole-3-glycerol phosphate synthase (258 aa).

The protein belongs to the TrpC family.

It catalyses the reaction 1-(2-carboxyphenylamino)-1-deoxy-D-ribulose 5-phosphate + H(+) = (1S,2R)-1-C-(indol-3-yl)glycerol 3-phosphate + CO2 + H2O. Its pathway is amino-acid biosynthesis; L-tryptophan biosynthesis; L-tryptophan from chorismate: step 4/5. This chain is Indole-3-glycerol phosphate synthase, found in Chlorobium limicola (strain DSM 245 / NBRC 103803 / 6330).